We begin with the raw amino-acid sequence, 958 residues long: Glycine dehydrogenase (decarboxylating) (958 aa).

Lys703 bears the N6-(pyridoxal phosphate)lysine mark.

Belongs to the GcvP family. As to quaternary structure, the glycine cleavage system is composed of four proteins: P, T, L and H. Pyridoxal 5'-phosphate serves as cofactor.

It catalyses the reaction N(6)-[(R)-lipoyl]-L-lysyl-[glycine-cleavage complex H protein] + glycine + H(+) = N(6)-[(R)-S(8)-aminomethyldihydrolipoyl]-L-lysyl-[glycine-cleavage complex H protein] + CO2. Its function is as follows. The glycine cleavage system catalyzes the degradation of glycine. The P protein binds the alpha-amino group of glycine through its pyridoxal phosphate cofactor; CO(2) is released and the remaining methylamine moiety is then transferred to the lipoamide cofactor of the H protein. The chain is Glycine dehydrogenase (decarboxylating) from Nitrobacter hamburgensis (strain DSM 10229 / NCIMB 13809 / X14).